Here is a 78-residue protein sequence, read N- to C-terminus: Large ribosomal subunit protein bL28 (78 aa).

The protein belongs to the bacterial ribosomal protein bL28 family.

This is Large ribosomal subunit protein bL28 from Haemophilus influenzae (strain 86-028NP).